A 228-amino-acid chain; its full sequence is Putative elongation factor Tu-like protein (228 aa).

Positions K6–F212 constitute a tr-type G domain. The tract at residues G15–T22 is G1. A G2 region spans residues G59–S63. The tract at residues D80 to G83 is G3. A G4 region spans residues N135–D138. The tract at residues S173–V175 is G5.

It belongs to the TRAFAC class translation factor GTPase superfamily. Classic translation factor GTPase family. EF-Tu/EF-1A subfamily.

In Ehrlichia ruminantium (strain Welgevonden), this protein is Putative elongation factor Tu-like protein.